Here is a 300-residue protein sequence, read N- to C-terminus: Spermatogenesis-associated serine-rich protein 1 (300 aa).

The segment covering 1 to 10 (MSPSMLTGNS) has biased composition (polar residues). 2 disordered regions span residues 1-42 (MSPS…MTEV) and 64-91 (TPSG…LPRV). The span at 27–42 (QLEKVPEKRDSGMTEV) shows a compositional bias: basic and acidic residues. Residues 64–85 (TPSGKSVSSSSSVETGPSVSEP) show a composition bias toward low complexity. Ser-113 carries the post-translational modification Phosphoserine.

This is Spermatogenesis-associated serine-rich protein 1 (SPATS1) from Homo sapiens (Human).